The following is a 146-amino-acid chain: Transmembrane protein 207 (146 aa).

The N-terminal stretch at 1–29 (MSRSRLFSVTSAISTIGILCLPLFQLVLS) is a signal peptide. A helical transmembrane segment spans residues 52-72 (IWILLLLVLVAALLCGAVVLC).

In terms of assembly, interacts with WWOX. In terms of tissue distribution, expressed in some signet-ring cell carcinoma, especially those showing high invasion and metastatic activity (at protein level).

It localises to the membrane. This chain is Transmembrane protein 207 (TMEM207), found in Homo sapiens (Human).